Here is a 635-residue protein sequence, read N- to C-terminus: 1-deoxy-D-xylulose-5-phosphate synthase (635 aa).

Residues histidine 76 and 117-119 (GHS) each bind thiamine diphosphate. A Mg(2+)-binding site is contributed by aspartate 148. Thiamine diphosphate is bound by residues 149–150 (GA), asparagine 177, tyrosine 294, and glutamate 379. Mg(2+) is bound at residue asparagine 177.

The protein belongs to the transketolase family. DXPS subfamily. As to quaternary structure, homodimer. Mg(2+) is required as a cofactor. The cofactor is thiamine diphosphate.

The catalysed reaction is D-glyceraldehyde 3-phosphate + pyruvate + H(+) = 1-deoxy-D-xylulose 5-phosphate + CO2. It participates in metabolic intermediate biosynthesis; 1-deoxy-D-xylulose 5-phosphate biosynthesis; 1-deoxy-D-xylulose 5-phosphate from D-glyceraldehyde 3-phosphate and pyruvate: step 1/1. In terms of biological role, catalyzes the acyloin condensation reaction between C atoms 2 and 3 of pyruvate and glyceraldehyde 3-phosphate to yield 1-deoxy-D-xylulose-5-phosphate (DXP). The chain is 1-deoxy-D-xylulose-5-phosphate synthase from Neisseria meningitidis serogroup C (strain 053442).